The following is a 448-amino-acid chain: Phosphoglucosamine mutase (448 aa).

The active-site Phosphoserine intermediate is Ser-100. Residues Ser-100, Asp-240, Asp-242, and Asp-244 each contribute to the Mg(2+) site. At Ser-100 the chain carries Phosphoserine.

This sequence belongs to the phosphohexose mutase family. The cofactor is Mg(2+). Post-translationally, activated by phosphorylation.

It carries out the reaction alpha-D-glucosamine 1-phosphate = D-glucosamine 6-phosphate. In terms of biological role, catalyzes the conversion of glucosamine-6-phosphate to glucosamine-1-phosphate. The chain is Phosphoglucosamine mutase from Bacillus anthracis (strain A0248).